We begin with the raw amino-acid sequence, 260 residues long: uncharacterized protein (260 aa).

Positions 214–252 form a coiled coil; sequence IHQFIETEIERIMEAAKELKAEKKDMTSELNRLLLNTVE.

This is an uncharacterized protein from Bacillus subtilis (strain 168).